A 276-amino-acid polypeptide reads, in one-letter code: Omega-amidase NIT2-A (276 aa).

The region spanning Phe-4–Leu-248 is the CN hydrolase domain. Glu-43 acts as the Proton acceptor in catalysis. The Proton donor role is filled by Lys-112. The active-site Nucleophile is the Cys-153.

This sequence belongs to the carbon-nitrogen hydrolase superfamily. NIT1/NIT2 family. As to quaternary structure, homodimer.

The protein resides in the cytoplasm. The catalysed reaction is 2-oxoglutaramate + H2O = 2-oxoglutarate + NH4(+). It catalyses the reaction 2-oxosuccinamate + H2O = oxaloacetate + NH4(+). Has omega-amidase activity. The role of omega-amidase is to remove potentially toxic intermediates by converting 2-oxoglutaramate and 2-oxosuccinamate to biologically useful 2-oxoglutarate and oxaloacetate, respectively. The protein is Omega-amidase NIT2-A (nit2a) of Xenopus laevis (African clawed frog).